The primary structure comprises 284 residues: D-tagatose-1,6-bisphosphate aldolase subunit GatY (284 aa).

D82 functions as the Proton donor in the catalytic mechanism. The Zn(2+) site is built by H83 and H180. G181 contacts dihydroxyacetone phosphate. A Zn(2+)-binding site is contributed by H208. Dihydroxyacetone phosphate-binding positions include G209–S211 and N230–T233.

The protein belongs to the class II fructose-bisphosphate aldolase family. TagBP aldolase GatY subfamily. In terms of assembly, forms a complex with GatZ. It depends on Zn(2+) as a cofactor.

The catalysed reaction is D-tagatofuranose 1,6-bisphosphate = D-glyceraldehyde 3-phosphate + dihydroxyacetone phosphate. It functions in the pathway carbohydrate metabolism; D-tagatose 6-phosphate degradation; D-glyceraldehyde 3-phosphate and glycerone phosphate from D-tagatose 6-phosphate: step 2/2. Functionally, catalytic subunit of the tagatose-1,6-bisphosphate aldolase GatYZ, which catalyzes the reversible aldol condensation of dihydroxyacetone phosphate (DHAP or glycerone-phosphate) with glyceraldehyde 3-phosphate (G3P) to produce tagatose 1,6-bisphosphate (TBP). Requires GatZ subunit for full activity and stability. Is involved in the catabolism of galactitol. This Salmonella newport (strain SL254) protein is D-tagatose-1,6-bisphosphate aldolase subunit GatY.